Here is a 170-residue protein sequence, read N- to C-terminus: Fimbrial protein (170 aa).

Residues 1–7 (MNTLQKG) constitute a propeptide, leader sequence. Position 8 is an N-methylphenylalanine (Phe-8). Residues 8–28 (FTLIELMIVIAIVGILAAVAL) traverse the membrane as a helical segment. O-linked (Gal...) serine glycosylation is present at Ser-70. Ser-100 bears the O-(sn-1-glycerophosphoryl)serine mark. A disulfide bridge links Cys-127 with Cys-163.

The protein belongs to the N-Me-Phe pilin family. In terms of assembly, the pili are polar flexible filaments of about 5.4 nanometers diameter and 2.5 micrometers average length; they consist of only a single polypeptide chain arranged in a helical configuration of five subunits per turn in the assembled pilus. Post-translationally, O-linked glycan has been reported to consist either of the Gal(alpha1-3) GlcNAc disaccharide, or the Gal(beta 1-4) Gal(alpha 1-3) 2,4-diacetamido-2,4,6-trideoxyhexose trisaccharide.

The protein localises to the fimbrium. Its subcellular location is the membrane. Functionally, major component of the type IV pilus (T4P) that plays a role in cellular adherence, microcolony formation as well as twitching motility. The sequence is that of Fimbrial protein (pilE) from Neisseria meningitidis serogroup B (strain ATCC BAA-335 / MC58).